The sequence spans 329 residues: D-alanine--D-alanine ligase (329 aa).

Positions 121–327 constitute an ATP-grasp domain; sequence KLWYDALDIP…FSEFLAQCVT (207 aa). 151–206 is a binding site for ATP; the sequence is AFGHWGSIFVKAARQGSSVGCYKVTTEDQIAPAIEAAFGFSEQVLVEQAVKPRELE. The Mg(2+) site is built by aspartate 281, glutamate 294, and asparagine 296.

It belongs to the D-alanine--D-alanine ligase family. It depends on Mg(2+) as a cofactor. Mn(2+) is required as a cofactor.

Its subcellular location is the cytoplasm. It carries out the reaction 2 D-alanine + ATP = D-alanyl-D-alanine + ADP + phosphate + H(+). The protein operates within cell wall biogenesis; peptidoglycan biosynthesis. Functionally, cell wall formation. The sequence is that of D-alanine--D-alanine ligase from Vibrio cholerae serotype O1 (strain ATCC 39541 / Classical Ogawa 395 / O395).